Here is a 257-residue protein sequence, read N- to C-terminus: UPF0246 protein KPK_4750 (257 aa).

This sequence belongs to the UPF0246 family.

This chain is UPF0246 protein KPK_4750, found in Klebsiella pneumoniae (strain 342).